The following is a 331-amino-acid chain: PDZ and LIM domain protein 4 (331 aa).

The PDZ domain occupies 1–84 (MPHSVTLRGP…HLTLSVSRPE (84 aa)). Disordered stretches follow at residues 80–99 (VSRP…KAQA), 105–152 (DSEA…GSNS), and 221–243 (AGEG…ASKL). 4 positions are modified to phosphoserine: serine 112, serine 116, serine 120, and serine 135. An LIM zinc-binding domain is found at 254–313 (PECTRCGHGIVGTIVKARDKLYHPECFMCSDCGLNLKQRGYFFLDERLYCESHAKARVKP).

As to quaternary structure, homodimer. Interacts (via C-terminus only or via combined C-terminus and LIM domain, but not LIM domain only) with PTPN13 (via the second or fourth PDZ domains). Found in a complex with PTPN13 and TRIP6. Interacts (via PDZ domain) with ACTN1 and ACTN2 (via C-terminal SDL residues). Interacts (via PDZ domain) with TRIP6 (via the second LIM domain or via the third LIM domain plus C-terminus). Interacts (via LIM domain) with GRIA1 (via C-terminus); this interaction as well as the interaction with alpha-actinin is required for their colocalization in early endosomes. Interacts with PDLIM1. Forms (via LIM domain) a heterodimer with PDLIM3. Interacts directly with SRC (via kinase domain and to a lesser extent the SH2 domain). Post-translationally, phosphorylated on tyrosine residue(s). Can be dephosphorylated by PTPN13.

It localises to the cytoplasm. It is found in the cytoskeleton. The protein resides in the cell projection. The protein localises to the dendritic spine. Its subcellular location is the early endosome membrane. It localises to the recycling endosome membrane. It is found in the nucleus. The protein resides in the perinuclear region. The protein localises to the lamellipodium. Its subcellular location is the synapse. It localises to the synaptosome. In terms of biological role, suppresses SRC activation by recognizing and binding to active SRC and facilitating PTPN13-mediated dephosphorylation of SRC 'Tyr-419' leading to its inactivation. Inactivated SRC dissociates from this protein allowing the initiation of a new SRC inactivation cycle. Involved in reorganization of the actin cytoskeleton. In nonmuscle cells, binds to ACTN1 (alpha-actinin-1), increases the affinity of ACTN1 to F-actin (filamentous actin), and promotes formation of actin stress fibers. Involved in regulation of the synaptic AMPA receptor transport in dendritic spines of hippocampal pyramidal neurons directing the receptors toward an insertion at the postsynaptic membrane. Links endosomal surface-internalized GRIA1-containing AMPA receptors to the alpha-actinin/actin cytoskeleton. Increases AMPA receptor-mediated excitatory postsynaptic currents in neurons. The chain is PDZ and LIM domain protein 4 (PDLIM4) from Bos taurus (Bovine).